The sequence spans 561 residues: DNA ligase B (561 aa).

Catalysis depends on Lys124, which acts as the N6-AMP-lysine intermediate.

Belongs to the NAD-dependent DNA ligase family. LigB subfamily.

It catalyses the reaction NAD(+) + (deoxyribonucleotide)n-3'-hydroxyl + 5'-phospho-(deoxyribonucleotide)m = (deoxyribonucleotide)n+m + AMP + beta-nicotinamide D-nucleotide.. Catalyzes the formation of phosphodiester linkages between 5'-phosphoryl and 3'-hydroxyl groups in double-stranded DNA using NAD as a coenzyme and as the energy source for the reaction. In Cronobacter sakazakii (strain ATCC BAA-894) (Enterobacter sakazakii), this protein is DNA ligase B.